The primary structure comprises 265 residues: RNA polymerase sigma factor SigI2 (265 aa).

Residues 71–84 carry the Polymerase core binding motif; the sequence is DEFSVGLAAFNEAI. A DNA-binding region (H-T-H motif) is located at residues 211–230; sequence KTELLKLLKINKKTIERNRT.

This sequence belongs to the sigma-70 factor family. SigI subfamily. Interacts with RsgI2.

The protein localises to the cytoplasm. Negatively regulated by the anti-sigma-I factor RsgI2. Binding of the polysaccharide substrate to RsgI2 may lead to the release and activation of SigI2. In terms of biological role, sigma factors are initiation factors that promote the attachment of RNA polymerase to specific initiation sites and are then released. This sigma factor is involved in regulation of cellulosomal genes via an external polysaccharide-sensing mechanism. This chain is RNA polymerase sigma factor SigI2, found in Acetivibrio thermocellus (strain ATCC 27405 / DSM 1237 / JCM 9322 / NBRC 103400 / NCIMB 10682 / NRRL B-4536 / VPI 7372) (Clostridium thermocellum).